The sequence spans 316 residues: Putative metal-binding protein TP_0034 (316 aa).

The signal sequence occupies residues 1-19 (MQRCSVVAALAGVVFLAQA). Residues H68, H146, and H210 each coordinate a divalent metal cation.

Belongs to the bacterial solute-binding protein 9 family.

The protein localises to the periplasm. Functionally, part of an ATP-binding cassette (ABC) transport system involved in metal import. Binds a metal with high affinity and specificity and delivers it to the membrane permease for translocation into the cytoplasm. The sequence is that of Putative metal-binding protein TP_0034 from Treponema pallidum (strain Nichols).